Reading from the N-terminus, the 1179-residue chain is Dynein axonemal assembly factor 9 (1179 aa).

In terms of assembly, interacts with ARL3.

Functionally, may act as an effector for ARL3. This chain is Dynein axonemal assembly factor 9, found in Mus musculus (Mouse).